The primary structure comprises 187 residues: MAQAAGVRRQLDSLTRNIFLRDVGRTVPEKSGAPLTGDSEVAPSVSLQIFLYFNAFYFPFWWVCYVIMLQLKYVLLPDYYKFILVVLLILMSVIEVIRLYLGYSGNLQEKVPELAGFCLLSILLQLPLLLFLLCDPGLEPLPLERAVHGILTAFLLIQIPISIFALRKATRHLAGRFHLLGDLDGRA.

4 consecutive transmembrane segments (helical) span residues 49–69 (IFLYFNAFYFPFWWVCYVIML), 82–102 (FILVVLLILMSVIEVIRLYLG), 114–134 (LAGFCLLSILLQLPLLLFLLC), and 146–166 (AVHGILTAFLLIQIPISIFAL).

The protein belongs to the TMEM17 family. In terms of assembly, part of the tectonic-like complex (also named B9 complex).

The protein localises to the cell projection. It localises to the cilium membrane. Functionally, transmembrane component of the tectonic-like complex, a complex localized at the transition zone of primary cilia and acting as a barrier that prevents diffusion of transmembrane proteins between the cilia and plasma membranes. Required for ciliogenesis and sonic hedgehog/SHH signaling. The protein is Transmembrane protein 17A (tmem17-a) of Xenopus tropicalis (Western clawed frog).